Consider the following 152-residue polypeptide: Large ribosomal subunit protein uL13 (152 aa).

The tract at residues 130–152 (HPHEAQSPEVLDLASKNPKNTRS) is disordered.

This sequence belongs to the universal ribosomal protein uL13 family. In terms of assembly, part of the 50S ribosomal subunit.

Its function is as follows. This protein is one of the early assembly proteins of the 50S ribosomal subunit, although it is not seen to bind rRNA by itself. It is important during the early stages of 50S assembly. The sequence is that of Large ribosomal subunit protein uL13 from Dinoroseobacter shibae (strain DSM 16493 / NCIMB 14021 / DFL 12).